Consider the following 546-residue polypeptide: Chaperonin GroEL 2 (546 aa).

Residues 30 to 33 (TLGP), K51, 87 to 91 (DGTTT), G415, and D495 contribute to the ATP site.

Belongs to the chaperonin (HSP60) family. Forms a cylinder of 14 subunits composed of two heptameric rings stacked back-to-back. Interacts with the co-chaperonin GroES.

The protein resides in the cytoplasm. It carries out the reaction ATP + H2O + a folded polypeptide = ADP + phosphate + an unfolded polypeptide.. Its function is as follows. Together with its co-chaperonin GroES, plays an essential role in assisting protein folding. The GroEL-GroES system forms a nano-cage that allows encapsulation of the non-native substrate proteins and provides a physical environment optimized to promote and accelerate protein folding. The polypeptide is Chaperonin GroEL 2 (Burkholderia cenocepacia (strain HI2424)).